Here is a 577-residue protein sequence, read N- to C-terminus: General transcription factor IIF subunit 1 (577 aa).

Residues 1-36 form a disordered region; it reads MSSASKSTPSAASGSSTSAAAAAAASVASGSASSSA. Residues S183, S246, S250, and S252 each carry the phosphoserine modification. Residues 236–508 are disordered; that stretch reads KITDMDEWID…TSLPTSFSGG (273 aa). Residues 240 to 256 show a composition bias toward acidic residues; the sequence is MDEWIDSEDESDSEDEE. Over residues 257–271 the composition is skewed to basic and acidic residues; that stretch reads DKKKKEQEDSDDGKA. Basic residues predominate over residues 272 to 285; sequence KGKGKKGADKKKKK. Over residues 289-304 the composition is skewed to acidic residues; that stretch reads DDEAFEESDDGDEEGR. The segment covering 319-341 has biased composition (basic and acidic residues); it reads PEAKVDKDMKGVAEEDALRKLLT. Position 341 is a phosphothreonine (T341). S342, S352, and S355 each carry phosphoserine. Over residues 362 to 376 the composition is skewed to basic and acidic residues; it reads GEKKKKDKGKDEVSK. Over residues 392–406 the composition is skewed to low complexity; sequence SNGSGDSSTDFSSDS. A compositionally biased stretch (basic and acidic residues) spans 423 to 437; the sequence is VVKDKDKEKEKEKES. The segment covering 438–456 has biased composition (low complexity); sequence AASSKVIASSSNANKSRSA. 2 positions are modified to phosphoserine: S453 and S455. At T457 the chain carries Phosphothreonine. 2 stretches are compositionally biased toward polar residues: residues 471 to 489 and 496 to 506; these read SLPS…TSTP and EISTSLPTSFS. A phosphoserine mark is found at S482 and S484. T488 is subject to Phosphothreonine.

The protein belongs to the TFIIF alpha subunit family. Heterodimer of an alpha and a beta subunit. In terms of processing, phosphorylated on Ser and other residues by TAF1 and casein kinase II-like kinases.

The protein resides in the nucleus. In terms of biological role, TFIIF is a general transcription initiation factor that binds to RNA polymerase II and helps to recruit it to the initiation complex in collaboration with TFIIB. It promotes transcription elongation. The chain is General transcription factor IIF subunit 1 from Drosophila melanogaster (Fruit fly).